Here is a 249-residue protein sequence, read N- to C-terminus: DNA repair protein RecO (249 aa).

This sequence belongs to the RecO family.

Involved in DNA repair and RecF pathway recombination. In Polaromonas naphthalenivorans (strain CJ2), this protein is DNA repair protein RecO.